The primary structure comprises 364 residues: DNA polymerase IV (364 aa).

Residues 8-189 (IIHIDMDCYF…LPLTKIPGVG (182 aa)) form the UmuC domain. Residues Asp-12 and Asp-107 each coordinate Mg(2+). Glu-108 is a catalytic residue.

This sequence belongs to the DNA polymerase type-Y family. Monomer. The cofactor is Mg(2+).

It localises to the cytoplasm. It carries out the reaction DNA(n) + a 2'-deoxyribonucleoside 5'-triphosphate = DNA(n+1) + diphosphate. In terms of biological role, poorly processive, error-prone DNA polymerase involved in untargeted mutagenesis. Copies undamaged DNA at stalled replication forks, which arise in vivo from mismatched or misaligned primer ends. These misaligned primers can be extended by PolIV. Exhibits no 3'-5' exonuclease (proofreading) activity. May be involved in translesional synthesis, in conjunction with the beta clamp from PolIII. The chain is DNA polymerase IV from Shewanella woodyi (strain ATCC 51908 / MS32).